The primary structure comprises 138 residues: Small ribosomal subunit protein uS11c (138 aa).

Belongs to the universal ribosomal protein uS11 family. In terms of assembly, part of the 30S ribosomal subunit.

It is found in the plastid. The protein resides in the chloroplast. This Morus indica (Mulberry) protein is Small ribosomal subunit protein uS11c.